Here is a 313-residue protein sequence, read N- to C-terminus: D-alanine--D-alanine ligase (313 aa).

Positions 108–308 constitute an ATP-grasp domain; sequence KLVWQQTGVP…YSELVVKVLS (201 aa). Residue 138–193 coordinates ATP; that stretch reads VAKLGLPLFVKPASEGSSVAVLKVKTADALPAALAEAATHDKIVIVEKSIEGGGEY. D262, E275, and N277 together coordinate Mg(2+).

This sequence belongs to the D-alanine--D-alanine ligase family. Mg(2+) serves as cofactor. Requires Mn(2+) as cofactor.

It localises to the cytoplasm. It carries out the reaction 2 D-alanine + ATP = D-alanyl-D-alanine + ADP + phosphate + H(+). It functions in the pathway cell wall biogenesis; peptidoglycan biosynthesis. Cell wall formation. The sequence is that of D-alanine--D-alanine ligase from Burkholderia multivorans (strain ATCC 17616 / 249).